The sequence spans 93 residues: Small ribosomal subunit protein uS19 (93 aa).

It belongs to the universal ribosomal protein uS19 family.

In terms of biological role, protein S19 forms a complex with S13 that binds strongly to the 16S ribosomal RNA. This is Small ribosomal subunit protein uS19 from Mycobacterium sp. (strain JLS).